Consider the following 132-residue polypeptide: U-scoloptoxin(11)-Sa1a (132 aa).

The first 19 residues, 1 to 19, serve as a signal peptide directing secretion; that stretch reads MIRFFAFVLFFATQELILC.

The protein belongs to the scoloptoxin-11 family. Post-translationally, contains 5 disulfide bonds. In terms of tissue distribution, expressed by the venom gland.

It localises to the secreted. The chain is U-scoloptoxin(11)-Sa1a from Scolopendra alternans (Florida Keys giant centipede).